The sequence spans 313 residues: Protein FixB (313 aa).

255–283 (LYLAVGISGQIQHMVGANASQTIFAINKD) provides a ligand contact to FAD.

It belongs to the ETF alpha-subunit/FixB family. Heterodimer of FixA and FixB.

The protein operates within amine and polyamine metabolism; carnitine metabolism. Functionally, required for anaerobic carnitine reduction. May bring reductant to CaiA. This is Protein FixB from Escherichia coli O17:K52:H18 (strain UMN026 / ExPEC).